The following is an 856-amino-acid chain: DNA mismatch repair protein MutS (856 aa).

ATP is bound at residue glycine 618–serine 625.

Belongs to the DNA mismatch repair MutS family.

Its function is as follows. This protein is involved in the repair of mismatches in DNA. It is possible that it carries out the mismatch recognition step. This protein has a weak ATPase activity. This Shewanella baltica (strain OS185) protein is DNA mismatch repair protein MutS.